Consider the following 134-residue polypeptide: Small ribosomal subunit protein uS11 (134 aa).

It belongs to the universal ribosomal protein uS11 family. As to quaternary structure, part of the 30S ribosomal subunit. Interacts with proteins S7 and S18. Binds to IF-3.

Located on the platform of the 30S subunit, it bridges several disparate RNA helices of the 16S rRNA. Forms part of the Shine-Dalgarno cleft in the 70S ribosome. This chain is Small ribosomal subunit protein uS11, found in Corynebacterium jeikeium (strain K411).